The following is a 331-amino-acid chain: Ferredoxin--NADP reductase 2 (331 aa).

Residues Glu37, Gln45, Tyr50, Val90, Phe124, Asp285, and Thr326 each coordinate FAD.

It belongs to the ferredoxin--NADP reductase type 2 family. Homodimer. It depends on FAD as a cofactor.

The catalysed reaction is 2 reduced [2Fe-2S]-[ferredoxin] + NADP(+) + H(+) = 2 oxidized [2Fe-2S]-[ferredoxin] + NADPH. In Bacillus velezensis (strain DSM 23117 / BGSC 10A6 / LMG 26770 / FZB42) (Bacillus amyloliquefaciens subsp. plantarum), this protein is Ferredoxin--NADP reductase 2.